The following is a 131-amino-acid chain: MRHYEIVFMVHPDQSEQVPGMIERYSAAITGAEGKIHRLEDWGRRQLAYPINKLHKAHYVLMNVEAPQEVIDELETTFRFNDAVIRSMIMRTKHAVTEASPMVKAKDERRERRDDFANETADDAEAGDSEE.

Residues 96-131 are disordered; the sequence is VTEASPMVKAKDERRERRDDFANETADDAEAGDSEE. Residues 104 to 116 are compositionally biased toward basic and acidic residues; it reads KAKDERRERRDDF. The span at 120 to 131 shows a compositional bias: acidic residues; that stretch reads TADDAEAGDSEE.

The protein belongs to the bacterial ribosomal protein bS6 family.

In terms of biological role, binds together with bS18 to 16S ribosomal RNA. In Salmonella arizonae (strain ATCC BAA-731 / CDC346-86 / RSK2980), this protein is Small ribosomal subunit protein bS6.